A 246-amino-acid polypeptide reads, in one-letter code: Carboxymethylenebutenolidase homolog (246 aa).

Residues cysteine 132, aspartate 179, and histidine 212 contribute to the active site.

It belongs to the dienelactone hydrolase family.

It is found in the cytoplasm. The protein localises to the cytosol. Cysteine hydrolase. This Xenopus tropicalis (Western clawed frog) protein is Carboxymethylenebutenolidase homolog (cmbl).